A 330-amino-acid polypeptide reads, in one-letter code: Tryptophan--tRNA ligase (330 aa).

ATP-binding positions include 9–11 and 17–18; these read QPT and GN. The short motif at 10–18 is the 'HIGH' region element; the sequence is PTGDPHIGN. An L-tryptophan-binding site is contributed by Asp136. ATP contacts are provided by residues 148–150, Ile187, and 195–199; these read GED and KMSKS. Positions 195 to 199 match the 'KMSKS' region motif; it reads KMSKS.

The protein belongs to the class-I aminoacyl-tRNA synthetase family. Homodimer.

The protein localises to the cytoplasm. It carries out the reaction tRNA(Trp) + L-tryptophan + ATP = L-tryptophyl-tRNA(Trp) + AMP + diphosphate + H(+). Functionally, catalyzes the attachment of tryptophan to tRNA(Trp). In Deinococcus radiodurans (strain ATCC 13939 / DSM 20539 / JCM 16871 / CCUG 27074 / LMG 4051 / NBRC 15346 / NCIMB 9279 / VKM B-1422 / R1), this protein is Tryptophan--tRNA ligase.